The primary structure comprises 104 residues: UPF0235 protein M446_3939 (104 aa).

This sequence belongs to the UPF0235 family.

This Methylobacterium sp. (strain 4-46) protein is UPF0235 protein M446_3939.